The following is a 271-amino-acid chain: Aminoglycoside N(3)-acetyltransferase III (271 aa).

5 residues coordinate CoA: histidine 31, alanine 32, serine 33, valine 34, and lysine 35. 3 residues coordinate a 2-deoxystreptamine antibiotic: tyrosine 64, aspartate 72, and glutamate 102. CoA contacts are provided by serine 104, valine 105, and phenylalanine 109. Glutamate 123, tyrosine 146, and aspartate 170 together coordinate a 2-deoxystreptamine antibiotic. CoA is bound by residues threonine 171 and threonine 173. A 2-deoxystreptamine antibiotic is bound by residues histidine 176, threonine 212, glycine 213, and phenylalanine 221.

This sequence belongs to the antibiotic N-acetyltransferase family. As to quaternary structure, homodimer.

The enzyme catalyses a 2-deoxystreptamine antibiotic + acetyl-CoA = an N(3)-acetyl-2-deoxystreptamine antibiotic + CoA + H(+). Functionally, resistance to antibiotics containing the 2-deoxy-streptamine ring including dibekacin, gentamicin, kanamycin, sisomicin, tobramycin and neomycin, but not to amikacin or netilmicin. Acetylates a broad range of both 4,5- and 4,6-disubstituted aminoglycosides, including neomycin, paromomycin, ribostamycin, sisomicin, gentamicin, tobramycin and kanamycin, with no preference of one disubstitution over the other. Acetylates sisomicin and kanamycin most and least efficiently, respectively. Does not modify plazomicin. This Pseudomonas aeruginosa protein is Aminoglycoside N(3)-acetyltransferase III.